The following is a 1045-amino-acid chain: Unconventional myosin-Ia (1045 aa).

The Myosin motor domain occupies 11–697; it reads AAVGDLVMLD…TLFDLEKRRQ (687 aa). 104–111 provides a ligand contact to ATP; it reads GESGAGKT. Positions 574-596 are actin-binding; the sequence is VATLMKNLYSKNPNYIRCIKPND. 3 IQ domains span residues 701–727, 723–750, and 746–774; these read AELATLIQKMFRGWCCRKRYQLMRKSQ, MRKSQILISAWFRGHMQRNRYKQMKRSV, and MKRSVLLLQAYARGWKTRRMYRRYFRSDA. The 184-residue stretch at 861–1044 folds into the TH1 domain; that stretch reads KALYAQSLQQ…RGSHKMEILV (184 aa).

Belongs to the TRAFAC class myosin-kinesin ATPase superfamily. Myosin family. Intestine.

Its function is as follows. Could play an important role in morphogenesis and function of intestinal microvilli. In Gallus gallus (Chicken), this protein is Unconventional myosin-Ia (MYO1A).